The primary structure comprises 172 residues: 3-hydroxydecanoyl-[acyl-carrier-protein] dehydratase (172 aa).

His-71 is a catalytic residue.

The protein belongs to the thioester dehydratase family. FabA subfamily. In terms of assembly, homodimer.

It is found in the cytoplasm. It catalyses the reaction a (3R)-hydroxyacyl-[ACP] = a (2E)-enoyl-[ACP] + H2O. The catalysed reaction is (3R)-hydroxydecanoyl-[ACP] = (2E)-decenoyl-[ACP] + H2O. The enzyme catalyses (2E)-decenoyl-[ACP] = (3Z)-decenoyl-[ACP]. Its pathway is lipid metabolism; fatty acid biosynthesis. Its function is as follows. Necessary for the introduction of cis unsaturation into fatty acids. Catalyzes the dehydration of (3R)-3-hydroxydecanoyl-ACP to E-(2)-decenoyl-ACP and then its isomerization to Z-(3)-decenoyl-ACP. Can catalyze the dehydratase reaction for beta-hydroxyacyl-ACPs with saturated chain lengths up to 16:0, being most active on intermediate chain length. The sequence is that of 3-hydroxydecanoyl-[acyl-carrier-protein] dehydratase from Yersinia pseudotuberculosis serotype O:1b (strain IP 31758).